The primary structure comprises 68 residues: MIGILLLIGICVAVTVAILYAMYNKIKNSQNPSPNVNLPPPETRNTRFVNNLEKDHISSLYNLVKSSV.

A helical transmembrane segment spans residues 1–21 (MIGILLLIGICVAVTVAILYA). Residues 22–68 (MYNKIKNSQNPSPNVNLPPPETRNTRFVNNLEKDHISSLYNLVKSSV) lie on the Virion surface side of the membrane.

It belongs to the orthopoxvirus OPG139 family. Phosphorylated by a OPG054-independent mechanism.

The protein localises to the virion membrane. Functionally, essential for the encapsidation of DNA into immature virions (IV) and the subsequent maturation of IV into mature virions (MV). In Homo sapiens (Human), this protein is Virion membrane protein OPG139 (OPG139).